The primary structure comprises 1662 residues: Cortactin-binding protein 2 (1662 aa).

Disordered stretches follow at residues 1–23, 202–235, 365–439, and 453–477; these read MATD…AGAA, KKKT…EFDT, IGVS…LHPG, and GNAN…SPTS. Residues 118–275 adopt a coiled-coil conformation; sequence RKMQERMSAQ…EQLKRGSDSK (158 aa). Residues 385-395 show a composition bias toward low complexity; sequence PSTGSTPDPTS. Over residues 404–421 the composition is skewed to polar residues; sequence AAPSTAQTPGITPQNSQA. The residue at position 497 (Arg-497) is an Asymmetric dimethylarginine. Positions 498–615 are disordered; the sequence is FTGPQAGAPP…SSPQLPPKPS (118 aa). Composition is skewed to polar residues over residues 516-529 and 582-592; these read DVST…TSVK and TVASPPSSLPQ. ANK repeat units follow at residues 708–738, 742–771, 775–804, 808–837, and 841–870; these read GRPT…DINY, DGHS…QVNA, NGFT…NINH, GGQT…DRSV, and DGWT…PAHG. The interval 871 to 897 is disordered; the sequence is NSFSEEESESGVFDLDEGEESPEGKSK. Residues 874–891 show a composition bias toward acidic residues; sequence SEEESESGVFDLDEGEES. One copy of the ANK 6 repeat lies at 911–941; it reads EGWTAAHIAASKGFKNCLEILCRHGGLETER. Residues 1446 to 1473 form a disordered region; it reads KKKGESGAWRKVNTSPRRKSGRFSLPTW. Position 1523 is a phosphoserine (Ser-1523). The disordered stretch occupies residues 1614–1662; that stretch reads VPRSKVTQCSQNTKRSSSSSNTRQIEINNNSKEENWNLHKNEHLEKPNK. The segment covering 1623-1637 has biased composition (low complexity); that stretch reads SQNTKRSSSSSNTRQ. The span at 1644 to 1662 shows a compositional bias: basic and acidic residues; that stretch reads SKEENWNLHKNEHLEKPNK.

As to quaternary structure, interacts with CTTN/cortactin SH3 domain. Interacts with STRN, STRN4/zinedin and MOB4/phocein; this interactions mediate the association with the STRIPAK core complex and may regulate dendritic spine distribution of the STRIPAK complex in hippocampal neurons. Activation of glutamate receptors weakens the interaction with STRN and STRN4.

Its subcellular location is the cytoplasm. The protein localises to the cell cortex. It is found in the cell projection. It localises to the dendritic spine. In terms of biological role, regulates the dendritic spine distribution of CTTN/cortactin in hippocampal neurons, and thus controls dendritic spinogenesis and dendritic spine maintenance. Associates with the striatin-interacting phosphatase and kinase (STRIPAK) core complex to regulate dendritic spine distribution of the STRIPAK complex in hippocampal neurons. The sequence is that of Cortactin-binding protein 2 (CTTNBP2) from Callithrix jacchus (White-tufted-ear marmoset).